Reading from the N-terminus, the 54-residue chain is Ovomucoid (54 aa).

Positions valine 4–cysteine 54 constitute a Kazal-like domain. 3 disulfides stabilise this stretch: cysteine 6–cysteine 36, cysteine 14–cysteine 33, and cysteine 22–cysteine 54. Residue asparagine 43 is glycosylated (N-linked (GlcNAc...) asparagine).

It is found in the secreted. This is Ovomucoid from Aepypodius arfakianus (Wattled brush turkey).